Here is a 127-residue protein sequence, read N- to C-terminus: Large ribosomal subunit protein eL8 (127 aa).

This sequence belongs to the eukaryotic ribosomal protein eL8 family. As to quaternary structure, part of the 50S ribosomal subunit. Probably part of the RNase P complex.

The protein localises to the cytoplasm. In terms of biological role, multifunctional RNA-binding protein that recognizes the K-turn motif in ribosomal RNA, the RNA component of RNase P, box H/ACA, box C/D and box C'/D' sRNAs. This Desulfurococcus amylolyticus (strain DSM 18924 / JCM 16383 / VKM B-2413 / 1221n) (Desulfurococcus kamchatkensis) protein is Large ribosomal subunit protein eL8.